A 300-amino-acid chain; its full sequence is 4-hydroxy-tetrahydrodipicolinate synthase (300 aa).

Pyruvate is bound at residue threonine 53. Catalysis depends on tyrosine 141, which acts as the Proton donor/acceptor. The active-site Schiff-base intermediate with substrate is the lysine 169. Threonine 211 provides a ligand contact to pyruvate.

This sequence belongs to the DapA family. Homotetramer; dimer of dimers.

The protein localises to the cytoplasm. It catalyses the reaction L-aspartate 4-semialdehyde + pyruvate = (2S,4S)-4-hydroxy-2,3,4,5-tetrahydrodipicolinate + H2O + H(+). Its pathway is amino-acid biosynthesis; L-lysine biosynthesis via DAP pathway; (S)-tetrahydrodipicolinate from L-aspartate: step 3/4. Its function is as follows. Catalyzes the condensation of (S)-aspartate-beta-semialdehyde [(S)-ASA] and pyruvate to 4-hydroxy-tetrahydrodipicolinate (HTPA). The protein is 4-hydroxy-tetrahydrodipicolinate synthase of Rickettsia massiliae (strain Mtu5).